The sequence spans 485 residues: Cobyric acid synthase (485 aa).

In terms of domain architecture, GATase cobBQ-type spans 250 to 436; sequence RRIVACPILP…IHGLLASPAL (187 aa). Cys-332 serves as the catalytic Nucleophile. The active site involves His-428.

The protein belongs to the CobB/CobQ family. CobQ subfamily.

It functions in the pathway cofactor biosynthesis; adenosylcobalamin biosynthesis. In terms of biological role, catalyzes amidations at positions B, D, E, and G on adenosylcobyrinic A,C-diamide. NH(2) groups are provided by glutamine, and one molecule of ATP is hydrogenolyzed for each amidation. The chain is Cobyric acid synthase from Sphingopyxis alaskensis (strain DSM 13593 / LMG 18877 / RB2256) (Sphingomonas alaskensis).